The primary structure comprises 513 residues: Microcin J25-processing protein McjC (513 aa).

The Asparagine synthetase domain occupies 176–436; the sequence is STIDSIIDNI…FGSDIFWKKT (261 aa).

It localises to the cytoplasm. Along with McjB, necessary and sufficient to process the inactive microcin J25 (McjA) precursor into the active peptide. May be involved in the formation of the amide bond between Gly-38 and Glu-53 of McjA. This is Microcin J25-processing protein McjC (mcjC) from Escherichia coli.